The chain runs to 735 residues: Transcription factor sphG (735 aa).

The zn(2)-C6 fungal-type DNA-binding region spans 13 to 40; sequence CDQCRARKIRCSREKPSCRNCGRLGLQC. The interval 89-110 is disordered; that stretch reads TISPSARCPASPASPSPRLSDK. Positions 91 to 106 are enriched in low complexity; it reads SPSARCPASPASPSPR.

Its subcellular location is the nucleus. In terms of biological role, transcription factor that regulates the expression of the gene cluster that mediates the biosynthesis of sphingofungins, bioactive molecules acting as sphingolipid inhibitors via inhibiting serine palmitoyl transferase (SPT). This Aspergillus fumigatus (strain CBS 144.89 / FGSC A1163 / CEA10) (Neosartorya fumigata) protein is Transcription factor sphG.